Here is a 251-residue protein sequence, read N- to C-terminus: GTP cyclohydrolase 1 type 2 homolog (251 aa).

Residues His-64, His-65, Asp-102, His-219, and Glu-223 each contribute to the a divalent metal cation site.

The protein belongs to the GTP cyclohydrolase I type 2/NIF3 family. Homohexamer.

This chain is GTP cyclohydrolase 1 type 2 homolog, found in Chlamydia trachomatis serovar D (strain ATCC VR-885 / DSM 19411 / UW-3/Cx).